The following is an 86-amino-acid chain: Large ribosomal subunit protein bL27 (86 aa).

Residues 1–26 (MAHKKAAGSTRNGRDSESKRLGVKRY) form a disordered region.

This sequence belongs to the bacterial ribosomal protein bL27 family.

The protein is Large ribosomal subunit protein bL27 of Marinobacter nauticus (strain ATCC 700491 / DSM 11845 / VT8) (Marinobacter aquaeolei).